The following is a 605-amino-acid chain: DNA mismatch repair protein MutL (605 aa).

This sequence belongs to the DNA mismatch repair MutL/HexB family.

This protein is involved in the repair of mismatches in DNA. It is required for dam-dependent methyl-directed DNA mismatch repair. May act as a 'molecular matchmaker', a protein that promotes the formation of a stable complex between two or more DNA-binding proteins in an ATP-dependent manner without itself being part of a final effector complex. This is DNA mismatch repair protein MutL from Methylocella silvestris (strain DSM 15510 / CIP 108128 / LMG 27833 / NCIMB 13906 / BL2).